Consider the following 190-residue polypeptide: Dynein axonemal light chain 1 (190 aa).

N-acetylalanine is present on Ala2. LRR repeat units follow at residues 47-69 (LANC…LNGL), 70-93 (KNLR…AVGD), 95-114 (LEEL…IHVM), and 115-138 (RKLK…KLAE). Phosphoserine is present on Ser56.

This sequence belongs to the dynein light chain LC1-type family. In terms of assembly, interacts with ZMYND10 (via C-terminus). Interacts with DNAH5, a outer arm dynein heavy chain. Interacts with tubulin located within the A-tubule of the outer doublets in a ATP-independent manner.

The protein localises to the cytoplasm. The protein resides in the cytoskeleton. It localises to the cilium axoneme. Its function is as follows. Part of the multisubunit axonemal ATPase complexes that generate the force for cilia motility and govern beat frequency. Component of the outer arm dynein (ODA). May be involved in a mechanosensory feedback mechanism controlling ODA activity based on external conformational cues by tethering the outer arm dynein heavy chain (DNAH5) to the microtubule within the axoneme. Important for ciliary function in the airways and for the function of the cilia that produce the nodal flow essential for the determination of the left-right asymmetry. In Rattus norvegicus (Rat), this protein is Dynein axonemal light chain 1.